Reading from the N-terminus, the 346-residue chain is 4-hydroxy-2-oxovalerate aldolase (346 aa).

The 253-residue stretch at 8-260 folds into the Pyruvate carboxyltransferase domain; the sequence is VTLHDMSLRD…ETGIDLYKIM (253 aa). 16–17 provides a ligand contact to substrate; that stretch reads RD. D17 is a Mn(2+) binding site. H20 acts as the Proton acceptor in catalysis. S170 and H199 together coordinate substrate. Residues H199 and H201 each contribute to the Mn(2+) site. Y290 provides a ligand contact to substrate.

It belongs to the 4-hydroxy-2-oxovalerate aldolase family.

The enzyme catalyses (S)-4-hydroxy-2-oxopentanoate = acetaldehyde + pyruvate. The protein is 4-hydroxy-2-oxovalerate aldolase (nahM) of Stutzerimonas stutzeri (Pseudomonas stutzeri).